Reading from the N-terminus, the 685-residue chain is Multisite-specific tRNA:(cytosine-C(5))-methyltransferase trm4b (685 aa).

Residues 167–173 (CAAPGSK), Asp208, Asp235, and Asp270 contribute to the S-adenosyl-L-methionine site. Cys323 acts as the Nucleophile in catalysis.

It belongs to the class I-like SAM-binding methyltransferase superfamily. RsmB/NOP family. TRM4 subfamily.

The protein resides in the nucleus. It carries out the reaction cytidine(49) in tRNA precursor + S-adenosyl-L-methionine = 5-methylcytidine(49) in tRNA precursor + S-adenosyl-L-homocysteine + H(+). The enzyme catalyses cytidine(50) in tRNA + S-adenosyl-L-methionine = 5-methylcytidine(50) in tRNA + S-adenosyl-L-homocysteine + H(+). It catalyses the reaction cytidine(60) in tRNA(Asp) + S-adenosyl-L-methionine = 5-methylcytidine(60) in tRNA(Asp) + S-adenosyl-L-homocysteine + H(+). The catalysed reaction is cytidine(61) in tRNA(Asp) + S-adenosyl-L-methionine = 5-methylcytidine(61) in tRNA(Asp) + S-adenosyl-L-homocysteine + H(+). It carries out the reaction cytidine(62) in tRNA(Asp) + S-adenosyl-L-methionine = 5-methylcytidine(62) in tRNA(Asp) + S-adenosyl-L-homocysteine + H(+). Functionally, tRNA cytosine C(5)-methyltransferase that methylates cytosine to 5-methylcytosine (m5C) in tRNAs at position 49 and 50. Trm4a and trm4b methylate different sets of tRNAs. Also methylates cytosine to m5C at positions (60, 61 and 62) in tRNA(Asp). This chain is Multisite-specific tRNA:(cytosine-C(5))-methyltransferase trm4b, found in Schizosaccharomyces pombe (strain 972 / ATCC 24843) (Fission yeast).